A 166-amino-acid polypeptide reads, in one-letter code: Urease accessory protein UreE 2 (166 aa).

The tract at residues 133–156 (QPEHGAYGGGHHHSRAGEEDFNYP) is disordered.

It belongs to the UreE family.

It is found in the cytoplasm. Its function is as follows. Involved in urease metallocenter assembly. Binds nickel. Probably functions as a nickel donor during metallocenter assembly. The chain is Urease accessory protein UreE 2 from Pseudomonas syringae pv. tomato (strain ATCC BAA-871 / DC3000).